Here is a 373-residue protein sequence, read N- to C-terminus: Chaperone protein DnaJ (373 aa).

Positions 4-68 (NYYQILGVSK…QKRAAYDRLG (65 aa)) constitute a J domain. Residues 136 to 214 (GIEKNISFSS…CHGMGRYHKQ (79 aa)) form a CR-type zinc finger. The Zn(2+) site is built by Cys-149, Cys-152, Cys-166, Cys-169, Cys-188, Cys-191, Cys-202, and Cys-205. CXXCXGXG motif repeat units lie at residues 149 to 156 (CDTCHGSG), 166 to 173 (CDACSGVG), 188 to 195 (CHKCQGNG), and 202 to 209 (CKKCHGMG).

This sequence belongs to the DnaJ family. In terms of assembly, homodimer. Zn(2+) is required as a cofactor.

Its subcellular location is the cytoplasm. Functionally, participates actively in the response to hyperosmotic and heat shock by preventing the aggregation of stress-denatured proteins and by disaggregating proteins, also in an autonomous, DnaK-independent fashion. Unfolded proteins bind initially to DnaJ; upon interaction with the DnaJ-bound protein, DnaK hydrolyzes its bound ATP, resulting in the formation of a stable complex. GrpE releases ADP from DnaK; ATP binding to DnaK triggers the release of the substrate protein, thus completing the reaction cycle. Several rounds of ATP-dependent interactions between DnaJ, DnaK and GrpE are required for fully efficient folding. Also involved, together with DnaK and GrpE, in the DNA replication of plasmids through activation of initiation proteins. This chain is Chaperone protein DnaJ, found in Rickettsia africae (strain ESF-5).